The chain runs to 812 residues: 1,4-alpha-glucan branching enzyme GlgB (812 aa).

Over residues 1 to 11 (MNNGDVNNGTA) the composition is skewed to polar residues. The disordered stretch occupies residues 1 to 83 (MNNGDVNNGT…SALPADPPAV (83 aa)). Low complexity predominate over residues 49–64 (SSASAQPGQTADDPAV). Residues 65 to 83 (PSAPPSAPPSALPADPPAV) are compositionally biased toward pro residues. Catalysis depends on D490, which acts as the Nucleophile. Residue E543 is the Proton donor of the active site.

It belongs to the glycosyl hydrolase 13 family. GlgB subfamily. As to quaternary structure, monomer.

It catalyses the reaction Transfers a segment of a (1-&gt;4)-alpha-D-glucan chain to a primary hydroxy group in a similar glucan chain.. It functions in the pathway glycan biosynthesis; glycogen biosynthesis. In terms of biological role, catalyzes the formation of the alpha-1,6-glucosidic linkages in glycogen by scission of a 1,4-alpha-linked oligosaccharide from growing alpha-1,4-glucan chains and the subsequent attachment of the oligosaccharide to the alpha-1,6 position. This is 1,4-alpha-glucan branching enzyme GlgB from Frankia casuarinae (strain DSM 45818 / CECT 9043 / HFP020203 / CcI3).